The primary structure comprises 554 residues: Phosphomannomutase (554 aa).

Catalysis depends on Ser-149, which acts as the Phosphoserine intermediate. The Mg(2+) site is built by Ser-149, Asp-301, Asp-303, and Asp-305.

Belongs to the phosphohexose mutase family. It depends on Mg(2+) as a cofactor.

The catalysed reaction is alpha-D-mannose 1-phosphate = D-mannose 6-phosphate. This is Phosphomannomutase (manB) from Mycoplasma pneumoniae (strain ATCC 29342 / M129 / Subtype 1) (Mycoplasmoides pneumoniae).